A 569-amino-acid chain; its full sequence is Urease subunit alpha (569 aa).

Residues 131-569 (GGFDSHIHFI…LPMAQRYFLF (439 aa)) form the Urease domain. Ni(2+)-binding residues include H136, H138, and K219. K219 carries the N6-carboxylysine modification. Position 221 (H221) interacts with substrate. H248 and H274 together coordinate Ni(2+). Residue H322 is the Proton donor of the active site. D362 is a binding site for Ni(2+).

It belongs to the metallo-dependent hydrolases superfamily. Urease alpha subunit family. Heterotrimer of UreA (gamma), UreB (beta) and UreC (alpha) subunits. Three heterotrimers associate to form the active enzyme. Ni cation serves as cofactor. In terms of processing, carboxylation allows a single lysine to coordinate two nickel ions.

The protein localises to the cytoplasm. The enzyme catalyses urea + 2 H2O + H(+) = hydrogencarbonate + 2 NH4(+). It functions in the pathway nitrogen metabolism; urea degradation; CO(2) and NH(3) from urea (urease route): step 1/1. This is Urease subunit alpha from Roseobacter denitrificans (strain ATCC 33942 / OCh 114) (Erythrobacter sp. (strain OCh 114)).